A 412-amino-acid chain; its full sequence is Putative disintegrin and metalloproteinase domain-containing protein 5 (412 aa).

The region spanning 111–199 (EKYADTNILL…YCLPDTYVRD (89 aa)) is the Disintegrin domain. An EGF-like domain is found at 351–385 (NLKLCDASNHCDRHGVCNNFNHCHCEKGYNPPYCQ).

In terms of assembly, interacts with TEX101. Highly expressed in testis.

In terms of biological role, this is a non catalytic metalloprotease-like protein. The chain is Putative disintegrin and metalloproteinase domain-containing protein 5 (ADAM5) from Homo sapiens (Human).